Here is a 655-residue protein sequence, read N- to C-terminus: Tetratricopeptide repeat protein 30 homolog (655 aa).

TPR repeat units follow at residues 10–43, 44–76, 143–176, 178–210, 385–418, 450–484, and 534–567; these read EGHV…ANTR, AGLS…APKE, ADTL…GGFN, LVAY…GMRN, LAAK…YLPV, SIWR…HSDD, and CIVN…GSGN.

Belongs to the TTC30/dfy-1/fleer family.

The protein resides in the cell projection. It is found in the cilium. Required for polyglutamylation of axonemal tubulin in sensory cilia. Plays a role in anterograde intraflagellar transport (IFT), the process by which cilia precursors are transported from the base of the cilium to the site of their incorporation at the tip. This chain is Tetratricopeptide repeat protein 30 homolog, found in Drosophila melanogaster (Fruit fly).